A 176-amino-acid polypeptide reads, in one-letter code: ATP-dependent protease subunit HslV (176 aa).

The active site involves Thr-5. Residues Ala-161, Cys-164, and Thr-167 each coordinate Na(+).

This sequence belongs to the peptidase T1B family. HslV subfamily. A double ring-shaped homohexamer of HslV is capped on each side by a ring-shaped HslU homohexamer. The assembly of the HslU/HslV complex is dependent on binding of ATP.

Its subcellular location is the cytoplasm. The catalysed reaction is ATP-dependent cleavage of peptide bonds with broad specificity.. With respect to regulation, allosterically activated by HslU binding. Protease subunit of a proteasome-like degradation complex believed to be a general protein degrading machinery. The protein is ATP-dependent protease subunit HslV of Pelotomaculum thermopropionicum (strain DSM 13744 / JCM 10971 / SI).